A 267-amino-acid chain; its full sequence is Hydroxyethylthiazole kinase (267 aa).

Met-46 contributes to the substrate binding site. Residues Arg-121 and Thr-167 each contribute to the ATP site. Residue Ala-194 coordinates substrate.

The protein belongs to the Thz kinase family. Requires Mg(2+) as cofactor.

The enzyme catalyses 5-(2-hydroxyethyl)-4-methylthiazole + ATP = 4-methyl-5-(2-phosphooxyethyl)-thiazole + ADP + H(+). The protein operates within cofactor biosynthesis; thiamine diphosphate biosynthesis; 4-methyl-5-(2-phosphoethyl)-thiazole from 5-(2-hydroxyethyl)-4-methylthiazole: step 1/1. Functionally, catalyzes the phosphorylation of the hydroxyl group of 4-methyl-5-beta-hydroxyethylthiazole (THZ). This chain is Hydroxyethylthiazole kinase, found in Rhizobium johnstonii (strain DSM 114642 / LMG 32736 / 3841) (Rhizobium leguminosarum bv. viciae).